The primary structure comprises 668 residues: tRNA 5-methylaminomethyl-2-thiouridine biosynthesis bifunctional protein MnmC (668 aa).

Residues Met1 to Glu245 are tRNA (mnm(5)s(2)U34)-methyltransferase. The segment at Ile270–Gly668 is FAD-dependent cmnm(5)s(2)U34 oxidoreductase.

This sequence in the N-terminal section; belongs to the methyltransferase superfamily. tRNA (mnm(5)s(2)U34)-methyltransferase family. The protein in the C-terminal section; belongs to the DAO family. FAD is required as a cofactor.

The protein localises to the cytoplasm. It catalyses the reaction 5-aminomethyl-2-thiouridine(34) in tRNA + S-adenosyl-L-methionine = 5-methylaminomethyl-2-thiouridine(34) in tRNA + S-adenosyl-L-homocysteine + H(+). In terms of biological role, catalyzes the last two steps in the biosynthesis of 5-methylaminomethyl-2-thiouridine (mnm(5)s(2)U) at the wobble position (U34) in tRNA. Catalyzes the FAD-dependent demodification of cmnm(5)s(2)U34 to nm(5)s(2)U34, followed by the transfer of a methyl group from S-adenosyl-L-methionine to nm(5)s(2)U34, to form mnm(5)s(2)U34. The protein is tRNA 5-methylaminomethyl-2-thiouridine biosynthesis bifunctional protein MnmC of Escherichia coli O6:H1 (strain CFT073 / ATCC 700928 / UPEC).